A 126-amino-acid chain; its full sequence is Small ribosomal subunit protein uS12 (126 aa).

Asp-89 bears the 3-methylthioaspartic acid mark. The tract at residues 106–126 (GVRERRRSRSKYGAKMPRSAA) is disordered.

It belongs to the universal ribosomal protein uS12 family. As to quaternary structure, part of the 30S ribosomal subunit. Contacts proteins S8 and S17. May interact with IF1 in the 30S initiation complex.

Its function is as follows. With S4 and S5 plays an important role in translational accuracy. Functionally, interacts with and stabilizes bases of the 16S rRNA that are involved in tRNA selection in the A site and with the mRNA backbone. Located at the interface of the 30S and 50S subunits, it traverses the body of the 30S subunit contacting proteins on the other side and probably holding the rRNA structure together. The combined cluster of proteins S8, S12 and S17 appears to hold together the shoulder and platform of the 30S subunit. In Tremblaya princeps, this protein is Small ribosomal subunit protein uS12.